We begin with the raw amino-acid sequence, 328 residues long: Tetraacyldisaccharide 4'-kinase (328 aa).

55–62 provides a ligand contact to ATP; it reads TAGGNGKT.

It belongs to the LpxK family.

The catalysed reaction is lipid A disaccharide (E. coli) + ATP = lipid IVA (E. coli) + ADP + H(+). It functions in the pathway glycolipid biosynthesis; lipid IV(A) biosynthesis; lipid IV(A) from (3R)-3-hydroxytetradecanoyl-[acyl-carrier-protein] and UDP-N-acetyl-alpha-D-glucosamine: step 6/6. Functionally, transfers the gamma-phosphate of ATP to the 4'-position of a tetraacyldisaccharide 1-phosphate intermediate (termed DS-1-P) to form tetraacyldisaccharide 1,4'-bis-phosphate (lipid IVA). The polypeptide is Tetraacyldisaccharide 4'-kinase (lpxK) (Escherichia coli (strain K12)).